Here is a 329-residue protein sequence, read N- to C-terminus: GTP 3',8-cyclase (329 aa).

Residues 8 to 234 enclose the Radical SAM core domain; the sequence is AFARKFYYLR…QLRQRSDGPA (227 aa). Position 17 (Arg17) interacts with GTP. Residues Cys24 and Cys28 each contribute to the [4Fe-4S] cluster site. An S-adenosyl-L-methionine-binding site is contributed by Tyr30. Position 31 (Cys31) interacts with [4Fe-4S] cluster. Arg68 contacts GTP. Residue Gly72 coordinates S-adenosyl-L-methionine. Thr99 serves as a coordination point for GTP. Ser123 is an S-adenosyl-L-methionine binding site. Lys160 provides a ligand contact to GTP. Met194 contributes to the S-adenosyl-L-methionine binding site. Cys257 and Cys260 together coordinate [4Fe-4S] cluster. GTP is bound at residue 262–264; it reads RLR. Cys274 lines the [4Fe-4S] cluster pocket.

This sequence belongs to the radical SAM superfamily. MoaA family. Monomer and homodimer. [4Fe-4S] cluster serves as cofactor.

It carries out the reaction GTP + AH2 + S-adenosyl-L-methionine = (8S)-3',8-cyclo-7,8-dihydroguanosine 5'-triphosphate + 5'-deoxyadenosine + L-methionine + A + H(+). It functions in the pathway cofactor biosynthesis; molybdopterin biosynthesis. Functionally, catalyzes the cyclization of GTP to (8S)-3',8-cyclo-7,8-dihydroguanosine 5'-triphosphate. This Escherichia coli O127:H6 (strain E2348/69 / EPEC) protein is GTP 3',8-cyclase.